We begin with the raw amino-acid sequence, 801 residues long: Mediator of RNA polymerase II transcription subunit 25 (801 aa).

3 stretches are compositionally biased toward low complexity: residues 647 to 676 (PQQL…QPGA), 687 to 710 (PQLR…QQPL), and 722 to 735 (PHQA…HQAP). Positions 647-735 (PQQLASQAPP…MGQQMQHQAP (89 aa)) are disordered. The LXXLL motif motif lies at 689-693 (LRNLL).

Belongs to the Mediator complex subunit 25 family. In terms of assembly, component of the Mediator complex.

The protein localises to the nucleus. Component of the Mediator complex, a coactivator involved in the regulated transcription of nearly all RNA polymerase II-dependent genes. Mediator functions as a bridge to convey information from gene-specific regulatory proteins to the basal RNA polymerase II transcription machinery. Mediator is recruited to promoters by direct interactions with regulatory proteins and serves as a scaffold for the assembly of a functional preinitiation complex with RNA polymerase II and the general transcription factors. The chain is Mediator of RNA polymerase II transcription subunit 25 (med25) from Xenopus laevis (African clawed frog).